The following is a 143-amino-acid chain: Cofilin (143 aa).

S4 carries the phosphoserine modification. The region spanning 5-137 (GVAVADESLT…SYDSVLERVS (133 aa)) is the ADF-H domain.

Belongs to the actin-binding proteins ADF family. In terms of assembly, interacts with actin and AIP1 in a ternary complex. In terms of processing, the N-terminus is blocked.

The protein resides in the cytoplasm. The protein localises to the cytoskeleton. Its subcellular location is the nucleus matrix. Its function is as follows. Controls reversibly actin polymerization and depolymerization in a pH-sensitive manner. It has the ability to bind G- and F-actin in a 1:1 ratio of cofilin to actin. Binding to F-actin is regulated by tropomyosin. It is the major component of intranuclear and cytoplasmic actin rods. Required for accumulation of actin at the cell division site via depolymerizing actin at the cell ends. In association with myosin II has a role in the assembly of the contractile ring via severing actin filaments. Involved in the maintenance of the contractile ring once formed. In association with profilin and capping protein, has a role in the mitotic reorganization of the actin cytoskeleton. In effect, yeast cofilin increases the rate of actin polymerization by making new ends available for actin subunit addition. Such a protein complex is important for the polarized growth of yeast cells. This Saccharomyces cerevisiae (strain ATCC 204508 / S288c) (Baker's yeast) protein is Cofilin (COF1).